The following is a 282-amino-acid chain: NADPH-dependent 7-cyano-7-deazaguanine reductase (282 aa).

88–90 provides a ligand contact to substrate; it reads IES. 90-91 lines the NADPH pocket; it reads SK. Catalysis depends on Cys-190, which acts as the Thioimide intermediate. The Proton donor role is filled by Asp-197. 229–230 lines the substrate pocket; sequence HE. 258–259 contributes to the NADPH binding site; that stretch reads RG.

The protein belongs to the GTP cyclohydrolase I family. QueF type 2 subfamily. As to quaternary structure, homodimer.

The protein localises to the cytoplasm. The catalysed reaction is 7-aminomethyl-7-carbaguanine + 2 NADP(+) = 7-cyano-7-deazaguanine + 2 NADPH + 3 H(+). Its pathway is tRNA modification; tRNA-queuosine biosynthesis. Its function is as follows. Catalyzes the NADPH-dependent reduction of 7-cyano-7-deazaguanine (preQ0) to 7-aminomethyl-7-deazaguanine (preQ1). This Escherichia coli O17:K52:H18 (strain UMN026 / ExPEC) protein is NADPH-dependent 7-cyano-7-deazaguanine reductase.